The chain runs to 252 residues: MSTPARNTTLTSNTPAGAPRLPGAPAPQVLPARPEPLALHASDSALIVVDMQNAYASMGGYVDSAGFDISGAQGTIANIARTIAAARTAGMLVVFLQNGWDAAYVEAGGPGSPNWHKSNALKTMRARPELAGKFLAKGGWDYELIAEMKPQPGDIVVPKTRYSGFFNSTLDSTLRARGIRHLVFTGIATNVCVESTLRDAFHLEYFAVMLEDATHELGGAAIQKASVYNVETFFGWVSTVDDFVRSFAPATA.

A compositionally biased stretch (polar residues) spans Met-1–Thr-14. The segment at Met-1 to Pro-31 is disordered. The span at Pro-15–Pro-27 shows a compositional bias: low complexity. Catalysis depends on Asp-50, which acts as the Proton acceptor. Residue Lys-159 is part of the active site. The active-site Nucleophile is Cys-192.

The protein belongs to the isochorismatase family. RutB subfamily.

It carries out the reaction (Z)-3-ureidoacrylate + H2O + H(+) = (Z)-3-aminoacrylate + NH4(+) + CO2. It catalyses the reaction (Z)-3-ureidoacrylate + H2O = (Z)-3-aminoacrylate + carbamate + H(+). The enzyme catalyses (Z)-2-methylureidoacrylate + H2O + H(+) = (Z)-2-methylaminoacrylate + NH4(+) + CO2. Hydrolyzes ureidoacrylate to form aminoacrylate and carbamate. The carbamate hydrolyzes spontaneously, thereby releasing one of the nitrogen atoms of the pyrimidine ring as ammonia and one of its carbon atoms as CO2. This Variovorax paradoxus (strain S110) protein is Ureidoacrylate amidohydrolase RutB.